A 438-amino-acid chain; its full sequence is Battenin (438 aa).

The disordered stretch occupies residues 1–29 (MGGCAGSRRRLLDSEEEETAPEPRPPRSY). The Cytoplasmic segment spans residues 1–37 (MGGCAGSRRRLLDSEEEETAPEPRPPRSYHKGALWKN). Serine 14 bears the Phosphoserine mark. Residues 38-58 (VMGFWLLGLCNNFSYVVMLSA) traverse the membrane as a helical segment. Residues 59–127 (AHDILSHQRA…GLHLLPYSPR (69 aa)) are Lumenal-facing. A disordered region spans residues 68 to 89 (ASGNQSHVDPDPPPTAHNSSSR). N-linked (GlcNAc...) asparagine glycosylation is found at asparagine 71 and asparagine 85. The chain crosses the membrane as a helical span at residues 128–148 (VLVSGICAAGSFILVAFSHSV). Topologically, residues 149-151 (GTS) are cytoplasmic. The helical transmembrane segment at 152 to 172 (LCGVVLASISSGVGEVTFLSL) threads the bilayer. Topologically, residues 173-182 (TAFYPRAVIS) are lumenal. A helical membrane pass occupies residues 183 to 203 (WWSSGTGGAGLMGALSYLGLT). Residues 204–277 (QAGLSPQHTL…NLSLQERWTV (74 aa)) are Cytoplasmic-facing. Residues 236–267 (PQDPGGEEEAETSARQPLIDSETPESKPDSSS) form a disordered region. The short motif at 242–244 (EEE) is the Lysosomal targeting motif element. Residues 253 to 254 (LI) carry the Lysosomal targeting motif. Required for AP1G1, AP2A2 and AP3D1 interaction motif. Residues 278–298 (FKGLLWYIVPLVLVYFAEYFI) form a helical membrane-spanning segment. Over 299-346 (NQGLFELLFFRNTSLNHAQQYRWYQMLYQAGVFVSRSSLHCCRIRFTW) the chain is Lumenal. Asparagine 310 is a glycosylation site (N-linked (GlcNAc...) asparagine). Residues 347–367 (VLALLQCLNLAFLLVDVWFSF) form a helical membrane-spanning segment. Residues 368–438 (LPSIYLVFLI…PLHDFLCHLS (71 aa)) are Cytoplasmic-facing. The Lysosomal targeting motif motif lies at 409–419 (MAAACISDTLG). Position 435 is a cysteine methyl ester (cysteine 435). Cysteine 435 carries S-farnesyl cysteine lipidation. Positions 436 to 438 (HLS) are cleaved as a propeptide — removed in mature form.

The protein belongs to the battenin family. In terms of assembly, interacts with DCTN1, KIF3A, RAB7A and RILP. Interacts with CLN5. Highly glycosylated. In terms of processing, farnesylation is important for trafficking to lysosomes.

It is found in the lysosome membrane. The protein resides in the late endosome. It localises to the lysosome. Functionally, mediates microtubule-dependent, anterograde transport connecting the Golgi network, endosomes, autophagosomes, lysosomes and plasma membrane, and participates in several cellular processes such as regulation of lysosomal pH, lysosome protein degradation, receptor-mediated endocytosis, autophagy, transport of proteins and lipids from the TGN, apoptosis and synaptic transmission. Facilitates the proteins transport from trans-Golgi network (TGN)-to other membrane compartments such as transport of microdomain-associated proteins to the plasma membrane, IGF2R transport to the lysosome where it regulates the CTSD release leading to regulation of CTSD maturation and thereby APP intracellular processing. Moreover regulates CTSD activity in response to osmotic stress. Also binds galactosylceramide and transports it from the trans Golgi to the rafts, which may have immediate and downstream effects on cell survival by modulating ceramide synthesis. At the plasma membrane, regulates actin-dependent events including filopodia formation, cell migration, and pinocytosis through ARF1-CDC42 pathway and also the cytoskeleton organization through interaction with MYH10 and fodrin leading to the regulation of the plasma membrane association of Na+, K+ ATPase complex. Regulates synaptic transmission in the amygdala, hippocampus, and cerebellum through regulation of synaptic vesicles density and their proximity to active zones leading to modulation of short-term plasticity and age-dependent anxious behavior, learning and memory. Regulates autophagic vacuoles (AVs) maturation by modulating the trafficking between endocytic and autophagolysosomal/lysosomal compartments, which involves vesicle fusion leading to regulation of degradation process. Also participates in cellular homeostasis of compounds such as, water, ions, amino acids, proteins and lipids in several tissue namely in brain and kidney through regulation of their transport and synthesis. This chain is Battenin, found in Canis lupus familiaris (Dog).